A 344-amino-acid chain; its full sequence is Heat-inducible transcription repressor HrcA (344 aa).

The protein belongs to the HrcA family.

Negative regulator of class I heat shock genes (grpE-dnaK-dnaJ and groELS operons). Prevents heat-shock induction of these operons. This Aster yellows witches'-broom phytoplasma (strain AYWB) protein is Heat-inducible transcription repressor HrcA.